A 380-amino-acid chain; its full sequence is Probable inactive dehydrogenase easA (380 aa).

FMN-binding positions include 25-27, alanine 60, glutamine 102, and histidine 171; that span reads PMT. Substrate contacts are provided by histidine 171 and asparagine 174. FMN is bound by residues lysine 223, glycine 299, 324 to 325, and arginine 325; that span reads GR. Tyrosine 352 provides a ligand contact to substrate.

The protein belongs to the NADH:flavin oxidoreductase/NADH oxidase family.

In terms of biological role, probable inactive dehydrogenase; part of the gene cluster that mediates the biosynthesis of fungal ergot alkaloid. DmaW catalyzes the first step of ergot alkaloid biosynthesis by condensing dimethylallyl diphosphate (DMAP) and tryptophan to form 4-dimethylallyl-L-tryptophan. The second step is catalyzed by the methyltransferase easF that methylates 4-dimethylallyl-L-tryptophan in the presence of S-adenosyl-L-methionine, resulting in the formation of 4-dimethylallyl-L-abrine. The catalase easC and the FAD-dependent oxidoreductase easE then transform 4-dimethylallyl-L-abrine to chanoclavine-I which is further oxidized by easD in the presence of NAD(+), resulting in the formation of chanoclavine-I aldehyde. Agroclavine dehydrogenase easG then mediates the conversion of chanoclavine-I aldehyde to agroclavine via a non-enzymatic adduct reaction: the substrate is an iminium intermediate that is formed spontaneously from chanoclavine-I aldehyde in the presence of glutathione. The presence of easA is not required to complete this reaction. Further conversion of agroclavine to paspalic acid is a two-step process involving oxidation of agroclavine to elymoclavine and of elymoclavine to paspalic acid, the second step being performed by the elymoclavine oxidase cloA. Paspalic acid is then further converted to D-lysergic acid. Ergopeptines are assembled from D-lysergic acid and three different amino acids by the D-lysergyl-peptide-synthetases composed each of a monomudular and a trimodular nonribosomal peptide synthetase subunit. LpsB and lpsC encode the monomodular subunits responsible for D-lysergic acid activation and incorporation into the ergopeptine backbone. LpsA1 and A2 subunits encode the trimodular nonribosomal peptide synthetase assembling the tripeptide portion of ergopeptines. LpsA1 is responsible for formation of the major ergopeptine, ergotamine, and lpsA2 for alpha-ergocryptine, the minor ergopeptine of the total alkaloid mixture elaborated by C.purpurea. D-lysergyl-tripeptides are assembled by the nonribosomal peptide synthetases and released as N-(D-lysergyl-aminoacyl)-lactams. Cyclolization of the D-lysergyl-tripeptides is performed by the Fe(2+)/2-ketoglutarate-dependent dioxygenase easH which introduces a hydroxyl group into N-(D-lysergyl-aminoacyl)-lactam at alpha-C of the aminoacyl residue followed by spontaneous condensation with the terminal lactam carbonyl group. This Claviceps purpurea (Ergot fungus) protein is Probable inactive dehydrogenase easA.